Here is a 186-residue protein sequence, read N- to C-terminus: Elongation factor P (186 aa).

It belongs to the elongation factor P family.

The protein localises to the cytoplasm. It functions in the pathway protein biosynthesis; polypeptide chain elongation. Its function is as follows. Involved in peptide bond synthesis. Stimulates efficient translation and peptide-bond synthesis on native or reconstituted 70S ribosomes in vitro. Probably functions indirectly by altering the affinity of the ribosome for aminoacyl-tRNA, thus increasing their reactivity as acceptors for peptidyl transferase. This is Elongation factor P from Shewanella loihica (strain ATCC BAA-1088 / PV-4).